The chain runs to 235 residues: Protein FAM3B (235 aa).

An N-terminal signal peptide occupies residues 1 to 29; the sequence is MRPLAGGLLKVVFVVFASLCAWYSGYLLA. 2 disulfide bridges follow: Cys63–Cys91 and Cys69–Cys229. A GG-type lectin domain is found at 72–233; the sequence is DTYAYRLLSG…IQIEGCIPKE (162 aa). N-linked (GlcNAc...) asparagine glycosylation is found at Asn120 and Asn208.

This sequence belongs to the FAM3 family. Post-translationally, 2 N-termini have been observed in the mature protein: the first at Glu-30, resulting from signal peptide cleavage, the second at Ser-46. In terms of processing, O-glycosylated. In terms of tissue distribution, highly expressed in the pancreas. Also found in the colon, kidney, prostate, small intestine and testis.

It is found in the secreted. Functionally, induces apoptosis of alpha and beta cells in a dose- and time-dependent manner. The chain is Protein FAM3B (FAM3B) from Homo sapiens (Human).